Consider the following 263-residue polypeptide: 3-methyl-2-oxobutanoate hydroxymethyltransferase (263 aa).

The Mg(2+) site is built by aspartate 45 and aspartate 84. Residues 45-46 (DS), aspartate 84, and lysine 113 contribute to the 3-methyl-2-oxobutanoate site. Glutamate 115 is a Mg(2+) binding site. Glutamate 182 (proton acceptor) is an active-site residue.

The protein belongs to the PanB family. In terms of assembly, homodecamer; pentamer of dimers. Mg(2+) serves as cofactor.

It localises to the cytoplasm. It carries out the reaction 3-methyl-2-oxobutanoate + (6R)-5,10-methylene-5,6,7,8-tetrahydrofolate + H2O = 2-dehydropantoate + (6S)-5,6,7,8-tetrahydrofolate. Its pathway is cofactor biosynthesis; coenzyme A biosynthesis. Its function is as follows. Catalyzes the reversible reaction in which hydroxymethyl group from 5,10-methylenetetrahydrofolate is transferred onto alpha-ketoisovalerate to form ketopantoate. The chain is 3-methyl-2-oxobutanoate hydroxymethyltransferase from Ignicoccus hospitalis (strain KIN4/I / DSM 18386 / JCM 14125).